The following is a 242-amino-acid chain: UPF0273 protein TM_0370 (242 aa).

Positions Lys3 to Arg242 constitute a KaiC domain. Gly30 to Thr37 contributes to the ATP binding site.

This sequence belongs to the UPF0273 family.

The sequence is that of UPF0273 protein TM_0370 from Thermotoga maritima (strain ATCC 43589 / DSM 3109 / JCM 10099 / NBRC 100826 / MSB8).